The chain runs to 24 residues: Coenzyme PQQ synthesis protein A (24 aa).

A cross-link (pyrroloquinoline quinone (Glu-Tyr)) is located at residues 16-20 (EVTMY).

This sequence belongs to the PqqA family.

Its pathway is cofactor biosynthesis; pyrroloquinoline quinone biosynthesis. In terms of biological role, required for coenzyme pyrroloquinoline quinone (PQQ) biosynthesis. PQQ is probably formed by cross-linking a specific glutamate to a specific tyrosine residue and excising these residues from the peptide. The polypeptide is Coenzyme PQQ synthesis protein A (Pseudomonas fluorescens (strain Pf0-1)).